Reading from the N-terminus, the 93-residue chain is Large ribosomal subunit protein uL23 (93 aa).

Belongs to the universal ribosomal protein uL23 family. Part of the 50S ribosomal subunit. Contacts protein L29, and trigger factor when it is bound to the ribosome.

In terms of biological role, one of the early assembly proteins it binds 23S rRNA. One of the proteins that surrounds the polypeptide exit tunnel on the outside of the ribosome. Forms the main docking site for trigger factor binding to the ribosome. The polypeptide is Large ribosomal subunit protein uL23 (Sulfurovum sp. (strain NBC37-1)).